Consider the following 469-residue polypeptide: Serine hydroxymethyltransferase, cytosolic (469 aa).

Residue Thr20 is modified to Phosphothreonine. Ser26 is subject to Phosphoserine. At Lys248 the chain carries N6-(pyridoxal phosphate)lysine. Ser429 carries the phosphoserine modification. A Glycyl lysine isopeptide (Lys-Gly) (interchain with G-Cter in ubiquitin) cross-link involves residue Lys456.

It belongs to the SHMT family. In terms of assembly, homotetramer. Requires pyridoxal 5'-phosphate as cofactor.

Its subcellular location is the cytoplasm. The catalysed reaction is (6R)-5,10-methylene-5,6,7,8-tetrahydrofolate + glycine + H2O = (6S)-5,6,7,8-tetrahydrofolate + L-serine. Its pathway is one-carbon metabolism; tetrahydrofolate interconversion. In terms of biological role, interconversion of serine and glycine. The polypeptide is Serine hydroxymethyltransferase, cytosolic (Saccharomyces cerevisiae (strain ATCC 204508 / S288c) (Baker's yeast)).